The chain runs to 221 residues: uncharacterized protein (221 aa).

This is an uncharacterized protein from Escherichia coli (strain K12).